Consider the following 93-residue polypeptide: Class II hydrophobin 1 (93 aa).

An N-terminal signal peptide occupies residues 1–16 (MKFFAVAALFVASAMA). Cystine bridges form between Cys24–Cys74, Cys35–Cys65, Cys36–Cys48, and Cys75–Cys86.

Belongs to the cerato-ulmin hydrophobin family. In terms of assembly, interacts with maize ubiquilin 1-like (UBL) protein. Homotetramer. Further self-assembles to form highly ordered films at water-air interfaces through intermolecular interactions.

It localises to the cell membrane. In terms of biological role, aerial growth, conidiation, and dispersal of filamentous fungi in the environment rely upon a capability of their secreting small amphipathic proteins called hydrophobins (HPBs) with low sequence identity. Class I can self-assemble into an outermost layer of rodlet bundles on aerial cell surfaces, conferring cellular hydrophobicity that supports fungal growth, development and dispersal; whereas Class II form highly ordered films at water-air interfaces through intermolecular interactions but contribute nothing to the rodlet structure. Hyd1 is a class II hydrophobin that acts as an elicitor of induced systemic resistance (ISR) in plants. During interaction with the plant, binds with the maize target protein UBL in order to recruit more UBL proteins in maize roots to elicit plant defense responses, including cell death as well as brassinosteroid, jasmonate (JA) and ethylene (ET) signaling. This is Class II hydrophobin 1 from Trichoderma harzianum (Hypocrea lixii).